The chain runs to 396 residues: Obg-like ATPase 1 (396 aa).

The OBG-type G domain occupies 23–283; it reads LKIGIVGLPN…LSAEERQKYL (261 aa). 32–37 provides a ligand contact to ATP; sequence NVGKST. Mg(2+) is bound by residues Ser-36 and Thr-56. Residue Leu-231 coordinates ATP. Positions 267-274 match the Nuclear export signal motif; that stretch reads LELRLQEL. Lys-294 carries the N6-acetyllysine modification. The 84-residue stretch at 304–387 folds into the TGS domain; sequence QLEYFFTAGP…EDGDIIFFKF (84 aa).

This sequence belongs to the TRAFAC class OBG-HflX-like GTPase superfamily. OBG GTPase family. YchF/OLA1 subfamily. As to quaternary structure, monomer. Mg(2+) is required as a cofactor.

The protein resides in the cytoplasm. It localises to the nucleus. The protein localises to the nucleolus. Its function is as follows. Hydrolyzes ATP, and can also hydrolyze GTP with lower efficiency. Has lower affinity for GTP. The protein is Obg-like ATPase 1 of Bos taurus (Bovine).